The chain runs to 233 residues: Zinc import ATP-binding protein ZnuC (233 aa).

The ABC transporter domain occupies 6 to 222; the sequence is IEFRNVSKKF…SEFSNALSSL (217 aa). ATP is bound at residue 38–45; it reads GPNGAGKT.

Belongs to the ABC transporter superfamily. Zinc importer (TC 3.A.1.15.5) family. The complex is composed of two ATP-binding proteins (ZnuC), two transmembrane proteins (ZnuB) and a solute-binding protein (ZnuA).

The protein resides in the cell inner membrane. It catalyses the reaction Zn(2+)(out) + ATP(in) + H2O(in) = Zn(2+)(in) + ADP(in) + phosphate(in) + H(+)(in). In terms of biological role, part of the ABC transporter complex ZnuABC involved in zinc import. Responsible for energy coupling to the transport system. This is Zinc import ATP-binding protein ZnuC from Rickettsia prowazekii (strain Madrid E).